The following is a 606-amino-acid chain: Kelch-like protein 41 (606 aa).

Phosphoserine is present on Ser-3. Residues 33 to 100 (IDCTLKAGDK…LYSASIDLND (68 aa)) enclose the BTB domain. Residues 135–237 (CLAILRLGLL…AEKYFKDHVE (103 aa)) form the BACK domain. Kelch repeat units lie at residues 346 to 398 (QVYV…EVDD), 399 to 447 (KIYV…SHNG), 448 to 495 (MIYC…IHKG), 497 to 542 (IVIA…SLAG), and 544 to 599 (LYAI…TRLN).

Interacts with NRAP. Part of a complex that contains CUL3, RBX1 and KLHL41. Interacts with LASP1. Ubiquitinated by E3 ubiquitin ligase complex formed by CUL3 and RBX1 and probably targeted for proteasome-independent degradation. Quinone-induced oxidative stress increases its ubiquitination. Skeletal muscle. Localized between laterally fusing myofibrils in skeletal muscle (at protein level). Expressed at a lower level in the heart compared to skeletal muscle.

The protein localises to the cytoplasm. It is found in the cytoskeleton. The protein resides in the cell projection. Its subcellular location is the pseudopodium. It localises to the ruffle. The protein localises to the myofibril. It is found in the sarcomere. The protein resides in the m line. Its subcellular location is the sarcoplasmic reticulum membrane. It localises to the endoplasmic reticulum membrane. Involved in skeletal muscle development and differentiation. Regulates proliferation and differentiation of myoblasts and plays a role in myofibril assembly by promoting lateral fusion of adjacent thin fibrils into mature, wide myofibrils. Required for pseudopod elongation in transformed cells. The polypeptide is Kelch-like protein 41 (Klhl41) (Mus musculus (Mouse)).